Consider the following 971-residue polypeptide: 116 kDa U5 small nuclear ribonucleoprotein component (971 aa).

Residue M1 is modified to N-acetylmethionine. The segment at 1 to 52 is disordered; the sequence is MDTDLYDEFGNYIGPELDSDEDDDELGRETKDLDEDEDEDEDDVGEHEDDHP. Acidic residues predominate over residues 17-47; that stretch reads LDSDEDDDELGRETKDLDEDEDEDEDDVGEH. S19 is subject to Phosphoserine. Residue K63 forms a Glycyl lysine isopeptide (Lys-Gly) (interchain with G-Cter in SUMO1); alternate linkage. K63 participates in a covalent cross-link: Glycyl lysine isopeptide (Lys-Gly) (interchain with G-Cter in SUMO2); alternate. T85 carries the phosphothreonine modification. One can recognise a tr-type G domain in the interval 126–408; the sequence is ELIRNVTLCG…GIHLTKEELK (283 aa). GTP contacts are provided by residues 135–142, 203–207, and 257–260; these read GHLHHGKT, DTPGH, and NKID.

It belongs to the TRAFAC class translation factor GTPase superfamily. Classic translation factor GTPase family. EF-G/EF-2 subfamily. Component of the U5 snRNP and the U4/U6-U5 tri-snRNP complex, a building block of the spliceosome. The U4/U6-U5 tri-snRNP complex is composed of the U4, U6 and U5 snRNAs and at least PRPF3, PRPF4, PRPF6, PRPF8, PRPF31, SNRNP200, TXNL4A, SNRNP40, DDX23, CD2BP2, PPIH, SNU13, EFTUD2, SART1 and USP39. Component of the pre-catalytic, catalytic and post-catalytic spliceosome complexes. Component of the minor spliceosome, which splices U12-type introns. Within this complex, interacts with CRIPT. Interacts with ERBB4 and PRPF8. Interacts with PIH1D1. Interacts with RPAP3 and URI1 in a ZNHIT2-dependent manner. Interacts with NRDE2. Interacts with FAM50A. Interacts with UBL5.

The protein resides in the nucleus. Its function is as follows. Required for pre-mRNA splicing as component of the spliceosome, including pre-catalytic, catalytic and post-catalytic spliceosomal complexes. Component of the U5 snRNP and the U4/U6-U5 tri-snRNP complex, a building block of the spliceosome. As a component of the minor spliceosome, involved in the splicing of U12-type introns in pre-mRNAs. This chain is 116 kDa U5 small nuclear ribonucleoprotein component (Eftud2), found in Mus musculus (Mouse).